The sequence spans 182 residues: Large ribosomal subunit protein uL6 (182 aa).

Belongs to the universal ribosomal protein uL6 family. As to quaternary structure, part of the 50S ribosomal subunit.

This protein binds to the 23S rRNA, and is important in its secondary structure. It is located near the subunit interface in the base of the L7/L12 stalk, and near the tRNA binding site of the peptidyltransferase center. This Trichormus variabilis (strain ATCC 29413 / PCC 7937) (Anabaena variabilis) protein is Large ribosomal subunit protein uL6.